Reading from the N-terminus, the 41-residue chain is Ornatin-A2 (41 aa).

The Cell attachment site signature appears at 33-35 (RGD).

The protein belongs to the ornatin family.

It localises to the secreted. Its function is as follows. Potent inhibitor of fibrinogen interaction with platelet receptors expressed on glycoprotein IIb-IIIa complex. May prevent blood from clotting during either feeding and/or storage of ingested blood. This Placobdella ornata (Turtle leech) protein is Ornatin-A2.